A 338-amino-acid polypeptide reads, in one-letter code: Heme-dependent oxidative N-demethylase alpha subunit (338 aa).

Residues Y38 and H194 each coordinate heme b. Catalysis depends on R224, which acts as the Proton donor. N226 lines the heme b pocket. Residue E266 coordinates dimethylamine. The heme b site is built by Y317 and K318.

As to quaternary structure, the heme-dependent oxidative N-demethylase (HODM) is a heterotetramer composed of a catalytic alpha subunit, a FMN/2Fe-2S-dependent oxidoreductase beta subunit, a gamma subunit with putative aminotransferase activity, and a delta subunit of unknown function.

It carries out the reaction dimethylamine + NADPH + O2 + H(+) = methylamine + formaldehyde + NADP(+) + H2O. Its function is as follows. Component of the heme-dependent oxidative N-demethylase (HODM) enzyme, that catalyzes the NADPH-dependent oxidation of dimethylamine (DMA) to methylamine (MA) and formaldehyde. Functions in bacterial methylated amine catabolism, linking alkylamine oxidation to the tetrahydrofolate C1 pool. The alpha subunit of HODM binds heme, oxygen and DMA, and serves as the site of the oxidative N-demethylase activity. The polypeptide is Heme-dependent oxidative N-demethylase alpha subunit (Ectopseudomonas mendocina (strain ymp) (Pseudomonas mendocina)).